A 323-amino-acid polypeptide reads, in one-letter code: Beta-ketoacyl-[acyl-carrier-protein] synthase III (323 aa).

Active-site residues include Cys-113 and His-250. The interval 251-255 (QANKR) is ACP-binding. Asn-280 is a catalytic residue.

Belongs to the thiolase-like superfamily. FabH family. Homodimer.

It localises to the cytoplasm. It catalyses the reaction malonyl-[ACP] + acetyl-CoA + H(+) = 3-oxobutanoyl-[ACP] + CO2 + CoA. It participates in lipid metabolism; fatty acid biosynthesis. Functionally, catalyzes the condensation reaction of fatty acid synthesis by the addition to an acyl acceptor of two carbons from malonyl-ACP. Catalyzes the first condensation reaction which initiates fatty acid synthesis and may therefore play a role in governing the total rate of fatty acid production. Possesses both acetoacetyl-ACP synthase and acetyl transacylase activities. Its substrate specificity determines the biosynthesis of branched-chain and/or straight-chain of fatty acids. The sequence is that of Beta-ketoacyl-[acyl-carrier-protein] synthase III from Mesorhizobium japonicum (strain LMG 29417 / CECT 9101 / MAFF 303099) (Mesorhizobium loti (strain MAFF 303099)).